We begin with the raw amino-acid sequence, 340 residues long: GTPase Obg (340 aa).

Residues 1-159 (MKFLDQAKVY…RTLWLRLKLI (159 aa)) form the Obg domain. Residues 160 to 327 (ADAGIIGLPN…LLRAGAHIIE (168 aa)) form the OBG-type G domain. GTP contacts are provided by residues 166–173 (GLPNAGKS), 191–195 (FTTLY), 212–215 (DIPG), 279–282 (SQID), and 308–310 (SAV). 2 residues coordinate Mg(2+): S173 and T193.

The protein belongs to the TRAFAC class OBG-HflX-like GTPase superfamily. OBG GTPase family. As to quaternary structure, monomer. Mg(2+) serves as cofactor.

The protein resides in the cytoplasm. Functionally, an essential GTPase which binds GTP, GDP and possibly (p)ppGpp with moderate affinity, with high nucleotide exchange rates and a fairly low GTP hydrolysis rate. Plays a role in control of the cell cycle, stress response, ribosome biogenesis and in those bacteria that undergo differentiation, in morphogenesis control. This Bartonella henselae (strain ATCC 49882 / DSM 28221 / CCUG 30454 / Houston 1) (Rochalimaea henselae) protein is GTPase Obg.